A 67-amino-acid chain; its full sequence is Islet amyloid polypeptide (67 aa).

The first 22 residues, 1–22 (MCILKLPIVLLVLSVAVNHLQA), serve as a signal peptide directing secretion. The propeptide occupies 23–31 (SPVESHQVE). A disulfide bridge connects residues Cys35 and Cys40.

It belongs to the calcitonin family. As to quaternary structure, can form homodimers. Interacts with IDE and INS. Interaction with INS inhibits homodimerization and fibril formation.

Its subcellular location is the secreted. Functionally, amylin/IAPP is a glucoregulatory peptide hormone that plays an important role in the regulation of energy homeostasis. Selectively inhibits insulin-stimulated glucose utilization and glycogen deposition in muscle, while not affecting adipocyte glucose metabolism. IAPP function is mediated by the CALCR-RAMPs (AMYRs) receptor complexes. Amylin can also bind CALCR receptor in the absence of RAMPs, although it is more selective for AMYRs. This is Islet amyloid polypeptide (IAPP) from Oryctolagus cuniculus (Rabbit).